Consider the following 106-residue polypeptide: Small ribosomal subunit protein bS16 (106 aa).

It belongs to the bacterial ribosomal protein bS16 family.

This chain is Small ribosomal subunit protein bS16, found in Wolbachia sp. subsp. Brugia malayi (strain TRS).